A 353-amino-acid chain; its full sequence is Ribosomal RNA small subunit methyltransferase (353 aa).

The span at 1–10 (MAGGKIRKEK) shows a compositional bias: basic residues. The interval 1 to 23 (MAGGKIRKEKPKASNRAPSNHYQ) is disordered. Residues His-35, Leu-37, Gly-62, Glu-83, Asp-111, and Asn-126 each contribute to the S-adenosyl-L-methionine site. The tract at residues 270 to 313 (ALNTTSMDLGDQSMGMEDDDNEMDDDDMEMDEGEGDGGETSEFK) is disordered. A compositionally biased stretch (acidic residues) spans 285–308 (MEDDDNEMDDDDMEMDEGEGDGGE).

This sequence belongs to the class I-like SAM-binding methyltransferase superfamily. rRNA adenine N(6)-methyltransferase family. Expressed in rapidly dividing tissues, including root meristems and lateral root primordia, developing cotyledons and leaves, petals, anther, pollen grains and silique abscission zone.

The protein localises to the nucleus. The protein resides in the nucleolus. The enzyme catalyses adenosine(1785)/adenosine(1786) in 18S rRNA + 4 S-adenosyl-L-methionine = N(6)-dimethyladenosine(1785)/N(6)-dimethyladenosine(1786) in 18S rRNA + 4 S-adenosyl-L-homocysteine + 4 H(+). In terms of biological role, N6-adenine methyltransferase which modifies the AA dinucleotide at the plant nuclear 18S rRNA nucleotides A1785 and A1786. Required for generating appropriate patterns of gene expression during root development, including the cell-specific expression of transcriptional regulators involved in root hair and non-hair cells patterning. This is Ribosomal RNA small subunit methyltransferase from Arabidopsis thaliana (Mouse-ear cress).